Here is a 250-residue protein sequence, read N- to C-terminus: AA9 family lytic polysaccharide monooxygenase F (250 aa).

Residues 1-21 form the signal peptide; the sequence is MAMSKIATLAGLLASAGLVAG. His22 is a Cu(2+) binding site. An O2-binding site is contributed by Asp51. Cystine bridges form between Cys77/Cys200 and Cys121/Cys125. His107 is a binding site for Cu(2+). O2 is bound by residues His186 and Gln195. Tyr197 contributes to the Cu(2+) binding site.

It belongs to the glycosyl hydrolase 61 family. Cu(2+) is required as a cofactor.

The protein resides in the secreted. The catalysed reaction is Endohydrolysis of (1-&gt;4)-beta-D-glucosidic linkages in cellulose, lichenin and cereal beta-D-glucans.. Its function is as follows. Lytic polysaccharide monooxygenase (LMPO) that depolymerizes crystalline and amorphous polysaccharides via the oxidation of scissile alpha- or beta-(1-4)-glycosidic bonds, yielding C1 or C4 oxidation products. Catalysis by LPMOs requires the reduction of the active-site copper from Cu(II) to Cu(I) by a reducing agent and H(2)O(2) or O(2) as a cosubstrate. Major secreted component of the extracellular cellulolytic system. The sequence is that of AA9 family lytic polysaccharide monooxygenase F from Emericella nidulans (strain FGSC A4 / ATCC 38163 / CBS 112.46 / NRRL 194 / M139) (Aspergillus nidulans).